A 239-amino-acid polypeptide reads, in one-letter code: mRNA turnover protein 4 homolog (239 aa).

The disordered stretch occupies residues 216-239 (QQMGDDLPESAPESEGESEEEDDS). A compositionally biased stretch (acidic residues) spans 221–239 (DLPESAPESEGESEEEDDS). Phosphoserine occurs at positions 225, 229, and 233.

It belongs to the universal ribosomal protein uL10 family. In terms of assembly, associates with the pre-60S ribosomal particle. Interacts with MINAS-60 (product of an alternative open reading frame of RBM10).

It localises to the nucleus. Its subcellular location is the nucleolus. It is found in the cytoplasm. Its function is as follows. Component of the ribosome assembly machinery. Nuclear paralog of the ribosomal protein P0, it binds pre-60S subunits at an early stage of assembly in the nucleolus, and is replaced by P0 in cytoplasmic pre-60S subunits and mature 80S ribosomes. The protein is mRNA turnover protein 4 homolog (MRTO4) of Bos taurus (Bovine).